Reading from the N-terminus, the 399-residue chain is ATP-dependent RNA helicase FAL1 (399 aa).

The Q motif motif lies at 23 to 51 (PTFESMNLKDDLLRGIYGYGFEAPSAIQS). In terms of domain architecture, Helicase ATP-binding spans 54–227 (ITQIISGTDV…KKFMSDPVKI (174 aa)). 67–74 (AQSGTGKT) contacts ATP. The short motif at 173-176 (DEAD) is the DEAD box element. The region spanning 238 to 399 (GIKQYYVNVE…PVPADLSTIS (162 aa)) is the Helicase C-terminal domain.

Belongs to the DEAD box helicase family. DDX48/FAL1 subfamily.

The protein localises to the nucleus. The protein resides in the nucleolus. The enzyme catalyses ATP + H2O = ADP + phosphate + H(+). ATP-dependent RNA helicase involved in 40S ribosomal subunit biogenesis. Required for the processing and cleavage of 35S pre-rRNA at sites A0, A1, and A2, leading to mature 18S rRNA. This chain is ATP-dependent RNA helicase FAL1 (FAL1), found in Vanderwaltozyma polyspora (strain ATCC 22028 / DSM 70294 / BCRC 21397 / CBS 2163 / NBRC 10782 / NRRL Y-8283 / UCD 57-17) (Kluyveromyces polysporus).